The sequence spans 419 residues: Synaptic vesicle membrane protein VAT-1 homolog-like (419 aa).

Basic and acidic residues predominate over residues 1-25 (MAKEGVEKAEETEQMIEKEAGKEPA). 2 disordered regions span residues 1–36 (MAKE…SHRL) and 384–419 (PTPL…PFIQ). Serine 392 carries the post-translational modification Phosphoserine. 2 positions are modified to phosphothreonine: threonine 393 and threonine 395. Phosphoserine is present on serine 396. Acidic residues predominate over residues 397-407 (EAGEEEEDHEG). A compositionally biased stretch (basic and acidic residues) spans 408 to 419 (DSENKERMPFIQ).

This sequence belongs to the zinc-containing alcohol dehydrogenase family. Quinone oxidoreductase subfamily. As to expression, detected in skin fibroblasts.

The sequence is that of Synaptic vesicle membrane protein VAT-1 homolog-like (VAT1L) from Homo sapiens (Human).